Reading from the N-terminus, the 201-residue chain is Recombination protein RecR (201 aa).

A C4-type zinc finger spans residues 60 to 75 (CSCCGNVDTSDPCTIC). Positions 83–178 (ATLIVVEDVS…RVTRLAHGVP (96 aa)) constitute a Toprim domain.

The protein belongs to the RecR family.

May play a role in DNA repair. It seems to be involved in an RecBC-independent recombinational process of DNA repair. It may act with RecF and RecO. The sequence is that of Recombination protein RecR from Brucella melitensis biotype 2 (strain ATCC 23457).